Reading from the N-terminus, the 337-residue chain is Sorting nexin-15 (337 aa).

One can recognise a PX domain in the interval 1–130 (MSRQAKDDFL…EFFRGGEVTR (130 aa)). Arg-51, Ser-53, Arg-87, and Arg-96 together coordinate a 1,2-diacyl-sn-glycero-3-phospho-(1D-myo-inositol-3-phosphate). Arg-105 carries the post-translational modification Omega-N-methylarginine. Positions 133–156 (EVSRDLRILPPPLIPTPPPDEARL) are disordered. Pro residues predominate over residues 141–151 (LPPPLIPTPPP). Residues Ser-201 and Ser-227 each carry the phosphoserine modification. Residues 244–270 (LDQEPWEPGGQEEEEAEDGEPAPAYLG) form a disordered region. Residues 253-263 (GQEEEEAEDGE) are compositionally biased toward acidic residues. Residues 265-337 (APAYLGQATE…RAEMLHTHLP (73 aa)) enclose the MIT domain.

Belongs to the sorting nexin family. Homodimer. Interacts with SNX1, SNX2 and SNX4.

It is found in the cytoplasm. Its subcellular location is the membrane. It localises to the cytoplasmic vesicle membrane. Its function is as follows. May be involved in several stages of intracellular trafficking. Overexpression of SNX15 disrupts the normal trafficking of proteins from the plasma membrane to recycling endosomes or the TGN. This chain is Sorting nexin-15 (Snx15), found in Mus musculus (Mouse).